A 127-amino-acid chain; its full sequence is Fluoride-specific ion channel FluC (127 aa).

4 consecutive transmembrane segments (helical) span residues 4–24 (LLLA…MLSM), 35–55 (IGTL…FAWF), 71–91 (TGFC…VFLL), and 103–123 (VLIN…LFSA). 2 residues coordinate Na(+): Gly75 and Thr78.

This sequence belongs to the fluoride channel Fluc/FEX (TC 1.A.43) family.

It localises to the cell inner membrane. The enzyme catalyses fluoride(in) = fluoride(out). Na(+) is not transported, but it plays an essential structural role and its presence is essential for fluoride channel function. Its function is as follows. Fluoride-specific ion channel. Important for reducing fluoride concentration in the cell, thus reducing its toxicity. The protein is Fluoride-specific ion channel FluC of Salmonella agona (strain SL483).